A 253-amino-acid polypeptide reads, in one-letter code: Probable transcriptional regulatory protein slr0989 (253 aa).

The interval 1-22 is disordered; it reads MGGRKWQSIKRQKARVDAQKGK.

The protein belongs to the TACO1 family.

The protein localises to the cytoplasm. In Synechocystis sp. (strain ATCC 27184 / PCC 6803 / Kazusa), this protein is Probable transcriptional regulatory protein slr0989.